Here is a 467-residue protein sequence, read N- to C-terminus: RuvB-like helicase 2 (467 aa).

73–80 contributes to the ATP binding site; sequence GPPSTGKT.

Belongs to the RuvB family. As to quaternary structure, may form heterododecamers with RVB1. Component of the SWR1 chromatin remodeling complex, the INO80 chromatin remodeling complex, and of the R2TP complex.

The protein localises to the nucleus. The enzyme catalyses ATP + H2O = ADP + phosphate + H(+). DNA helicase which participates in several chromatin remodeling complexes, including the SWR1 and the INO80 complexes. The SWR1 complex mediates the ATP-dependent exchange of histone H2A for the H2A variant HZT1 leading to transcriptional regulation of selected genes by chromatin remodeling. The INO80 complex remodels chromatin by shifting nucleosomes and is involved in DNA repair. Also involved in pre-rRNA processing. The chain is RuvB-like helicase 2 (RVB2) from Kluyveromyces lactis (strain ATCC 8585 / CBS 2359 / DSM 70799 / NBRC 1267 / NRRL Y-1140 / WM37) (Yeast).